A 329-amino-acid polypeptide reads, in one-letter code: Biotin synthase (329 aa).

Residues 38-262 enclose the Radical SAM core domain; sequence NTIQVSTLLS…IMPYSYIRLS (225 aa). Residues C53, C57, and C60 each contribute to the [4Fe-4S] cluster site. 4 residues coordinate [2Fe-2S] cluster: C97, C128, C188, and R260.

This sequence belongs to the radical SAM superfamily. Biotin synthase family. As to quaternary structure, homodimer. [4Fe-4S] cluster is required as a cofactor. Requires [2Fe-2S] cluster as cofactor.

The catalysed reaction is (4R,5S)-dethiobiotin + (sulfur carrier)-SH + 2 reduced [2Fe-2S]-[ferredoxin] + 2 S-adenosyl-L-methionine = (sulfur carrier)-H + biotin + 2 5'-deoxyadenosine + 2 L-methionine + 2 oxidized [2Fe-2S]-[ferredoxin]. Its pathway is cofactor biosynthesis; biotin biosynthesis; biotin from 7,8-diaminononanoate: step 2/2. Functionally, catalyzes the conversion of dethiobiotin (DTB) to biotin by the insertion of a sulfur atom into dethiobiotin via a radical-based mechanism. The polypeptide is Biotin synthase (Acinetobacter baylyi (strain ATCC 33305 / BD413 / ADP1)).